Here is a 207-residue protein sequence, read N- to C-terminus: Large ribosomal subunit protein uL4 (207 aa).

The segment at 44-78 (MRQGTHKTKNRAEVSGGGRKPWRQKGTGRARQGSI) is disordered.

The protein belongs to the universal ribosomal protein uL4 family. Part of the 50S ribosomal subunit.

One of the primary rRNA binding proteins, this protein initially binds near the 5'-end of the 23S rRNA. It is important during the early stages of 50S assembly. It makes multiple contacts with different domains of the 23S rRNA in the assembled 50S subunit and ribosome. Functionally, forms part of the polypeptide exit tunnel. This chain is Large ribosomal subunit protein uL4, found in Geobacillus kaustophilus (strain HTA426).